We begin with the raw amino-acid sequence, 256 residues long: Ribosomal RNA large subunit methyltransferase E (256 aa).

5 residues coordinate S-adenosyl-L-methionine: glycine 50, tryptophan 52, aspartate 69, aspartate 85, and aspartate 108. Residue lysine 148 is the Proton acceptor of the active site. In terms of domain architecture, TRAM spans 195 to 253 (SLRKGDVVDVTIDAMGKTGDGIAHVDDFVVFVKGGSVGDKLKIKITDVKPSFAFADIVE).

The protein belongs to the class I-like SAM-binding methyltransferase superfamily. RNA methyltransferase RlmE family.

Its subcellular location is the cytoplasm. It carries out the reaction uridine(2552) in 23S rRNA + S-adenosyl-L-methionine = 2'-O-methyluridine(2552) in 23S rRNA + S-adenosyl-L-homocysteine + H(+). Specifically methylates the uridine in position 2552 of 23S rRNA at the 2'-O position of the ribose in the fully assembled 50S ribosomal subunit. The polypeptide is Ribosomal RNA large subunit methyltransferase E (Methanocella arvoryzae (strain DSM 22066 / NBRC 105507 / MRE50)).